The chain runs to 458 residues: Phosphoglucosamine mutase (458 aa).

The active-site Phosphoserine intermediate is Ser-106. Ser-106, Asp-247, Asp-249, and Asp-251 together coordinate Mg(2+). Ser-106 bears the Phosphoserine mark.

Belongs to the phosphohexose mutase family. It depends on Mg(2+) as a cofactor. In terms of processing, activated by phosphorylation.

It carries out the reaction alpha-D-glucosamine 1-phosphate = D-glucosamine 6-phosphate. Functionally, catalyzes the conversion of glucosamine-6-phosphate to glucosamine-1-phosphate. This is Phosphoglucosamine mutase from Chlamydia trachomatis serovar L2 (strain ATCC VR-902B / DSM 19102 / 434/Bu).